The chain runs to 490 residues: Dual specificity protein kinase CLK3 (490 aa).

Positions 1–138 are disordered; it reads MHHCKRYRSP…SKRSSRSVED (138 aa). Tyrosine 7 is modified (phosphotyrosine). Phosphoserine occurs at positions 9, 49, 51, 67, 76, and 78. Basic and acidic residues-rich tracts occupy residues 26–56 and 63–76; these read YSREHEGRLRYPSRREPPPRRSRSRSHDRIP and EHRDSDTYRCEERS. Residues 88–116 are compositionally biased toward basic residues; it reads RSRHRRRSRERAPYRTRKHAHHCHKRRTR. The span at 117 to 130 shows a compositional bias: low complexity; the sequence is SCSSASSRSQQSSK. Serine 135 is subject to Phosphoserine. A Protein kinase domain is found at 156–472; that stretch reads YEIVGNLGEG…LAEALLHPFF (317 aa). ATP contacts are provided by residues 162–170 and lysine 186; that span reads LGEGTFGKV. The active-site Proton acceptor is aspartate 283.

Belongs to the protein kinase superfamily. CMGC Ser/Thr protein kinase family. Lammer subfamily. Autophosphorylates on all three types of residues. In terms of tissue distribution, present at high levels in testis and ovary. In testis, expression is restricted to elongated, maturing spermatozoa. Also present in spleen, brain, lung and liver (at protein level).

It is found in the nucleus. Its subcellular location is the cytoplasm. The protein localises to the cytoplasmic vesicle. The protein resides in the secretory vesicle. It localises to the acrosome. It carries out the reaction L-seryl-[protein] + ATP = O-phospho-L-seryl-[protein] + ADP + H(+). It catalyses the reaction L-threonyl-[protein] + ATP = O-phospho-L-threonyl-[protein] + ADP + H(+). The enzyme catalyses L-tyrosyl-[protein] + ATP = O-phospho-L-tyrosyl-[protein] + ADP + H(+). Its activity is regulated as follows. Leucettine L41 inhibits its kinase activity and affects the regulation of alternative splicing mediated by phosphorylation of SR proteins. Dual specificity kinase acting on both serine/threonine and tyrosine-containing substrates. Phosphorylates serine- and arginine-rich (SR) proteins of the spliceosomal complex. May be a constituent of a network of regulatory mechanisms that enable SR proteins to control RNA splicing and can cause redistribution of SR proteins from speckles to a diffuse nucleoplasmic distribution. Phosphorylates SRSF1 and SRSF3. Regulates the alternative splicing of tissue factor (F3) pre-mRNA in endothelial cells. This chain is Dual specificity protein kinase CLK3, found in Mus musculus (Mouse).